Consider the following 363-residue polypeptide: G kinase-anchoring protein 1-B (363 aa).

Disordered regions lie at residues A17–A79 and V147–K182. A coiled-coil region spans residues K50–A79. Positions K160–N170 are enriched in basic residues. Coiled coils occupy residues D249 to E298 and A328 to Q348.

The protein belongs to the GKAP1 family.

The protein localises to the golgi apparatus. May play a role in the regulation of insulin-dependent IRS1 tyrosine phosphorylation in adipocytes. The chain is G kinase-anchoring protein 1-B (gkap1-b) from Xenopus laevis (African clawed frog).